We begin with the raw amino-acid sequence, 555 residues long: uncharacterized protein (555 aa).

The next 5 membrane-spanning stretches (helical) occupy residues 13-30, 35-57, 72-91, 98-120, and 157-179; these read ALQAVVVLSLISAIGLGL, FWGVSLGVTFVFFAGILAGHFGL, LVIFVYSLGLQVGPGFFSSF, LNMLALAVVLLGTLLTVVASYAT, and TPALGCAVAYPMGVIGVILAVLL. 2 RCK C-terminal domains span residues 188 to 273 and 282 to 366; these read EDLE…LFGE and KEDI…VLGN. Transmembrane regions (helical) follow at residues 376 to 398, 408 to 430, 437 to 459, 469 to 491, 498 to 517, and 532 to 554; these read LVVIFIGIVLGLALGAIPFSIPG, AGGPIIVGILLGTFGPRIHMITY, LMLRALGLSMYLACLGLDAGAHF, LLWIALGAGLTIIPTVLVGFVAF, FGSVSGMLCGSMANPMALNY, and ATVYPLCMFLRVIIAQVLLMFLL.

Belongs to the AAE transporter (TC 2.A.81) family.

It is found in the cell membrane. This is an uncharacterized protein from Bacteroides thetaiotaomicron (strain ATCC 29148 / DSM 2079 / JCM 5827 / CCUG 10774 / NCTC 10582 / VPI-5482 / E50).